A 203-amino-acid chain; its full sequence is Proteasome subunit beta 2 (203 aa).

A propeptide spans 1-9 (MGEEVSIGA) (removed in mature form; by autocatalysis). Thr10 functions as the Nucleophile in the catalytic mechanism.

This sequence belongs to the peptidase T1B family. As to quaternary structure, the 20S proteasome core is composed of 14 alpha and 14 beta subunits that assemble into four stacked heptameric rings, resulting in a barrel-shaped structure. The two inner rings, each composed of seven catalytic beta subunits, are sandwiched by two outer rings, each composed of seven alpha subunits. The catalytic chamber with the active sites is on the inside of the barrel. Has a gated structure, the ends of the cylinder being occluded by the N-termini of the alpha-subunits. Is capped at one or both ends by the proteasome regulatory ATPase, PAN.

The protein localises to the cytoplasm. The enzyme catalyses Cleavage of peptide bonds with very broad specificity.. With respect to regulation, the formation of the proteasomal ATPase PAN-20S proteasome complex, via the docking of the C-termini of PAN into the intersubunit pockets in the alpha-rings, triggers opening of the gate for substrate entry. Interconversion between the open-gate and close-gate conformations leads to a dynamic regulation of the 20S proteasome proteolysis activity. Functionally, component of the proteasome core, a large protease complex with broad specificity involved in protein degradation. The sequence is that of Proteasome subunit beta 2 from Pyrobaculum calidifontis (strain DSM 21063 / JCM 11548 / VA1).